Consider the following 1035-residue polypeptide: Cell-division control histidine kinase PdhS (1035 aa).

Residues 1–613 form an important for polar localization region; it reads MSGSYPFIDI…HADGSEEPVD (613 aa). The disordered stretch occupies residues 500 to 533; the sequence is QGLANTRAESETPVSETSSIEPVEPTPPVKTRSE. Positions 614 to 1035 are interaction with DivK; it reads THLNAIAWRG…VFPPTRVLAD (422 aa). The 72-residue stretch at 659-730 folds into the PAS domain; the sequence is HVEELKTILD…YLHGLSGNGV (72 aa). In terms of domain architecture, Histidine kinase spans 802–1031; that stretch reads RISHEIRTPL…VVEIVFPPTR (230 aa). The residue at position 805 (His805) is a Phosphohistidine; by autocatalysis.

As to quaternary structure, interacts with DivK.

The protein resides in the cytoplasm. It catalyses the reaction ATP + protein L-histidine = ADP + protein N-phospho-L-histidine.. Functionally, functions as a polar differentiation marker. Essential protein that, by localizing in the old pole of dividing cells, controls cell division and maturation, probably through control of DivK phosphorylation status and cellular distribution, which in turn regulates CtrA, a transcriptional regulator of the minB operon. The asymmetrical localization of this protein is probably required for cells to enter a new division cycle. The sequence is that of Cell-division control histidine kinase PdhS (pdhS) from Brucella suis (strain ATCC 23445 / NCTC 10510).